Here is a 422-residue protein sequence, read N- to C-terminus: Elongation factor 1-alpha (422 aa).

One can recognise a tr-type G domain in the interval 5 to 221; sequence KPHMNLAVIG…DELKEPEKPS (217 aa). The tract at residues 14–21 is G1; it reads GHIDHGKS. Residue 14–21 participates in GTP binding; the sequence is GHIDHGKS. Ser21 lines the Mg(2+) pocket. A G2 region spans residues 70–74; it reads GITID. Positions 91–94 are G3; the sequence is DCPG. Residues 91–95 and 146–149 each bind GTP; these read DCPGH and NKMD. The interval 146–149 is G4; sequence NKMD. Residues 185-187 are G5; that stretch reads SAF.

The protein belongs to the TRAFAC class translation factor GTPase superfamily. Classic translation factor GTPase family. EF-Tu/EF-1A subfamily.

The protein localises to the cytoplasm. It carries out the reaction GTP + H2O = GDP + phosphate + H(+). Its function is as follows. GTP hydrolase that promotes the GTP-dependent binding of aminoacyl-tRNA to the A-site of ribosomes during protein biosynthesis. The polypeptide is Elongation factor 1-alpha (Methanosarcina acetivorans (strain ATCC 35395 / DSM 2834 / JCM 12185 / C2A)).